The chain runs to 340 residues: Putative esterase YheT (340 aa).

One can recognise an AB hydrolase-1 domain in the interval 73–312 (PRLVVFHGLE…TEHGGHVGFI (240 aa)). Residues S153, D280, and H308 each act as charge relay system in the active site.

It belongs to the AB hydrolase superfamily. AB hydrolase 4 family.

This chain is Putative esterase YheT (yheT), found in Escherichia coli (strain K12).